The primary structure comprises 1901 residues: A-kinase anchor protein 11 (1901 aa).

Phosphoserine occurs at positions 18, 422, 433, 444, and 448. The segment at 407 to 443 (ALPANVRKPTPRKPESPYGNLCDAPDSPRPVKASRED) is disordered. Disordered regions lie at residues 843–864 (NPGN…SSSK) and 971–993 (LPVS…DSQN). Phosphothreonine is present on residues threonine 981 and threonine 1100. Positions 1131-1153 (EFAPATPPSTPHNSSVGSLSENE) are disordered. The span at 1141 to 1153 (PHNSSVGSLSENE) shows a compositional bias: polar residues. 5 positions are modified to phosphoserine: serine 1171, serine 1176, serine 1177, serine 1242, and serine 1337. The residue at position 1485 (threonine 1485) is a Phosphothreonine. Serine 1580 is modified (phosphoserine). The segment at 1650–1663 (LAEKIVAEAIEKAE) is PKA-RII subunit binding domain. The disordered stretch occupies residues 1708–1805 (KEIEDFQSTE…HEDEVEGLGQ (98 aa)). The span at 1713 to 1740 (FQSTESVSSQQMNLSIGDDSTGSWSNLS) shows a compositional bias: polar residues. Residues 1747-1756 (DESSSFHHLS) are compositionally biased toward basic and acidic residues. Residues 1757-1772 (ESNGNSSSWSSLGLEG) show a composition bias toward low complexity. Over residues 1787–1801 (DGPDDKDEEHEDEVE) the composition is skewed to acidic residues.

Belongs to the AKAP110 family. Expressed in heart, brain, lung, liver, kidney, testis and ovary. Weakly expressed in skeletal muscle, pancreas and spleen.

It is found in the cytoplasm. The protein resides in the cytoskeleton. Its subcellular location is the microtubule organizing center. It localises to the centrosome. Binds to type II regulatory subunits of protein kinase A and anchors/targets them. The sequence is that of A-kinase anchor protein 11 (AKAP11) from Homo sapiens (Human).